Reading from the N-terminus, the 272-residue chain is Putative hydro-lyase Rpal_1947 (272 aa).

It belongs to the D-glutamate cyclase family.

The sequence is that of Putative hydro-lyase Rpal_1947 from Rhodopseudomonas palustris (strain TIE-1).